Consider the following 115-residue polypeptide: Ribonuclease P protein component (115 aa).

Belongs to the RnpA family. In terms of assembly, consists of a catalytic RNA component (M1 or rnpB) and a protein subunit.

It catalyses the reaction Endonucleolytic cleavage of RNA, removing 5'-extranucleotides from tRNA precursor.. RNaseP catalyzes the removal of the 5'-leader sequence from pre-tRNA to produce the mature 5'-terminus. It can also cleave other RNA substrates such as 4.5S RNA. The protein component plays an auxiliary but essential role in vivo by binding to the 5'-leader sequence and broadening the substrate specificity of the ribozyme. This chain is Ribonuclease P protein component, found in Bacillus cereus (strain ATCC 10987 / NRS 248).